A 28-amino-acid polypeptide reads, in one-letter code: 3-phytase B (28 aa).

The interval 1-28 (RDPTGCEVDQVIMVKRHGERYPSPSAGK) is disordered. His-17 (nucleophile) is an active-site residue.

This sequence belongs to the histidine acid phosphatase family.

It catalyses the reaction 1D-myo-inositol hexakisphosphate + H2O = 1D-myo-inositol 1,2,4,5,6-pentakisphosphate + phosphate. In terms of biological role, catalyzes the hydrolysis of inorganic orthophosphate from phytate. The polypeptide is 3-phytase B (phyB) (Aspergillus ficuum).